Reading from the N-terminus, the 468-residue chain is Protein NEN1 (468 aa).

An Exonuclease domain is found at 11–172; sequence FFDVETTVPK…DDVRMNLEVL (162 aa). Positions 13 and 15 each coordinate Mg(2+). His-159 acts as the Proton donor/acceptor in catalysis. Asp-164 contributes to the Mg(2+) binding site.

Mg(2+) serves as cofactor. Expressed in the sieve elements and phloem pole pericycle cells.

The protein resides in the cytoplasm. The protein localises to the nucleus. Its function is as follows. Probable exonuclease involved in enuclation of sieve elements. The polypeptide is Protein NEN1 (Arabidopsis thaliana (Mouse-ear cress)).